A 157-amino-acid chain; its full sequence is Small ribosomal subunit protein uS7 (157 aa).

Belongs to the universal ribosomal protein uS7 family. As to quaternary structure, part of the 30S ribosomal subunit. Contacts proteins S9 and S11.

One of the primary rRNA binding proteins, it binds directly to 16S rRNA where it nucleates assembly of the head domain of the 30S subunit. Is located at the subunit interface close to the decoding center, probably blocks exit of the E-site tRNA. The polypeptide is Small ribosomal subunit protein uS7 (Psychrobacter sp. (strain PRwf-1)).